A 68-amino-acid polypeptide reads, in one-letter code: Adipokinetic prohormone type 1 (68 aa).

The N-terminal stretch at 1 to 20 (MNYVSIFVLIVACLCVLADA) is a signal peptide. Gln-21 carries the post-translational modification Pyrrolidone carboxylic acid. Gly-30 carries the glycine amide modification. Residues 34–68 (GAVAATMSCRSEETIAAIYKLIQNEAERLLLCQKP) constitute a propeptide that is removed on maturation.

In terms of tissue distribution, expressed in antennal lobe (AL), corpora cardiaca (CC), corpora allata (CA) and gnathal ganglion (GNG) (at protein level). Expression in CC and CA detected in all animals, expression in GNG in some animals and in AL in few animals (at protein level).

It localises to the secreted. In terms of biological role, this hormone, released from cells in the corpora cardiaca, causes release of diglycerides from the fat body and stimulation of muscles to use these diglycerides as an energy source during energy-demanding processes. This chain is Adipokinetic prohormone type 1, found in Agrotis ipsilon (Black cutworm moth).